An 85-amino-acid chain; its full sequence is CRISPR-associated endoribonuclease Cas2 2 (85 aa).

Asp8 provides a ligand contact to Mg(2+).

It belongs to the CRISPR-associated endoribonuclease Cas2 protein family. As to quaternary structure, homodimer, forms a heterotetramer with a Cas1 homodimer. The cofactor is Mg(2+).

In terms of biological role, CRISPR (clustered regularly interspaced short palindromic repeat), is an adaptive immune system that provides protection against mobile genetic elements (viruses, transposable elements and conjugative plasmids). CRISPR clusters contain sequences complementary to antecedent mobile elements and target invading nucleic acids. CRISPR clusters are transcribed and processed into CRISPR RNA (crRNA). Functions as a ssRNA-specific endoribonuclease. Involved in the integration of spacer DNA into the CRISPR cassette. The sequence is that of CRISPR-associated endoribonuclease Cas2 2 from Chloroflexus aurantiacus (strain ATCC 29366 / DSM 635 / J-10-fl).